A 448-amino-acid polypeptide reads, in one-letter code: Senescence/dehydration-associated protein At4g35985, chloroplastic (448 aa).

A disordered region spans residues methionine 1 to asparagine 36. The transit peptide at methionine 1–threonine 56 directs the protein to the chloroplast. Residues serine 26–asparagine 36 are compositionally biased toward low complexity. The 169-residue stretch at isoleucine 248 to alanine 416 folds into the Senescence domain. A disordered region spans residues alanine 422 to lysine 448. A compositionally biased stretch (basic residues) spans glutamate 439–lysine 448.

In terms of tissue distribution, expressed in leaves (especially in midribs and trichomes), apical meristemic regions, stems, roots and flowers.

The protein localises to the plastid. Its subcellular location is the chloroplast. This chain is Senescence/dehydration-associated protein At4g35985, chloroplastic, found in Arabidopsis thaliana (Mouse-ear cress).